A 168-amino-acid chain; its full sequence is G/U mismatch-specific DNA glycosylase (168 aa).

This sequence belongs to the uracil-DNA glycosylase (UDG) superfamily. TDG/mug family. Binds DNA as a monomer.

The protein localises to the cytoplasm. It carries out the reaction Specifically hydrolyzes mismatched double-stranded DNA and polynucleotides, releasing free uracil.. Its function is as follows. Excises ethenocytosine and uracil, which can arise by alkylation or deamination of cytosine, respectively, from the corresponding mispairs with guanine in ds-DNA. It is capable of hydrolyzing the carbon-nitrogen bond between the sugar-phosphate backbone of the DNA and the mispaired base. The complementary strand guanine functions in substrate recognition. Required for DNA damage lesion repair in stationary-phase cells. This Klebsiella pneumoniae subsp. pneumoniae (strain ATCC 700721 / MGH 78578) protein is G/U mismatch-specific DNA glycosylase.